We begin with the raw amino-acid sequence, 281 residues long: Ribose-phosphate pyrophosphokinase (281 aa).

Residues 33–35 and 90–91 each bind ATP; these read DGE and RQ. Residues His-123 and Asp-161 each coordinate Mg(2+). Lys-185 is a catalytic residue. D-ribose 5-phosphate contacts are provided by Arg-187 and Asp-211.

This sequence belongs to the ribose-phosphate pyrophosphokinase family. Class III (archaeal) subfamily. It depends on Mg(2+) as a cofactor.

It localises to the cytoplasm. It catalyses the reaction D-ribose 5-phosphate + ATP = 5-phospho-alpha-D-ribose 1-diphosphate + AMP + H(+). It functions in the pathway metabolic intermediate biosynthesis; 5-phospho-alpha-D-ribose 1-diphosphate biosynthesis; 5-phospho-alpha-D-ribose 1-diphosphate from D-ribose 5-phosphate (route I): step 1/1. In terms of biological role, involved in the biosynthesis of the central metabolite phospho-alpha-D-ribosyl-1-pyrophosphate (PRPP) via the transfer of pyrophosphoryl group from ATP to 1-hydroxyl of ribose-5-phosphate (Rib-5-P). The protein is Ribose-phosphate pyrophosphokinase of Halobacterium salinarum (strain ATCC 29341 / DSM 671 / R1).